We begin with the raw amino-acid sequence, 142 residues long: Large ribosomal subunit protein uL13 (142 aa).

The protein belongs to the universal ribosomal protein uL13 family. Part of the 50S ribosomal subunit.

Functionally, this protein is one of the early assembly proteins of the 50S ribosomal subunit, although it is not seen to bind rRNA by itself. It is important during the early stages of 50S assembly. The protein is Large ribosomal subunit protein uL13 of Pseudomonas syringae pv. tomato (strain ATCC BAA-871 / DC3000).